The primary structure comprises 89 residues: UPF0367 protein P9515_01381 (89 aa).

Belongs to the UPF0367 family.

The protein is UPF0367 protein P9515_01381 of Prochlorococcus marinus (strain MIT 9515).